Consider the following 128-residue polypeptide: DNA polymerase epsilon subunit 3 (128 aa).

Over residues 98-110 (EKKESKASKKDSN) the composition is skewed to basic and acidic residues. Residues 98–128 (EKKESKASKKDSNTAENANASATATAEEAPE) are disordered. Low complexity predominate over residues 111–128 (TAENANASATATAEEAPE).

In terms of assembly, homodimer. Component of the DNA polymerase epsilon complex consisting of four subunits: the catalytic subunit PolE1/DNApol-epsilon255 and the accessory subunits PolE2/DNApol-epsilon58, Chrac-14/DNApolE3 and PolE4. Component of the chromatin accessibility complex (CHRAC), composed of Chrac-14, Chrac-16, Acf and Iswi. Forms an heterodimer with Chrac-16. The Chrac-14/Chrac-16 heterodimer interacts with Acf (via N-terminus). Interacts directly with Iswi and this interaction is further stabilized by association with Chrac-16. Component of the Ada2a-containing (ATAC) complex composed of at least Ada2a, Atac1, Hcf, Ada3, Gcn5, Mocs2B, Charac-14, Atac3, Atac2, NC2beta and wds. Interacts with cid.

The protein localises to the nucleus. Accessory component of the DNA polymerase epsilon complex. Participates in DNA repair and in chromosomal DNA replication. Histone-like protein which promotes nucleosome sliding of ATP-dependent nucleosome remodeling complexes. Part of the chromatin-accessibility complex (CHRAC) which uses energy/ATP to increase the general accessibility of DNA in chromatin. As a heterodimer with Chrac-16, binds DNA and facilitates nucleosome sliding by Acf. Has a role in DNA damage response by preventing cid mislocalization to chromatin. This Drosophila melanogaster (Fruit fly) protein is DNA polymerase epsilon subunit 3.